A 237-amino-acid polypeptide reads, in one-letter code: uncharacterized protein (237 aa).

The region spanning 3–116 is the Response regulatory domain; it reads RILLVEDDER…VVMAKIKSVL (114 aa). 4-aspartylphosphate is present on Asp52. The segment at residues 131 to 229 is a DNA-binding region (ompR/PhoB-type); it reads SRIVELGGLT…IRGQGYQFQV (99 aa).

Post-translationally, phosphorylated by YvcQ.

It localises to the cytoplasm. Its function is as follows. Member of the two-component regulatory system YvcQ/YvcP. This is an uncharacterized protein from Bacillus subtilis (strain 168).